We begin with the raw amino-acid sequence, 162 residues long: Cyclic pyranopterin monophosphate synthase (162 aa).

Substrate-binding positions include 75–77 (LCH) and 113–114 (ME). The active site involves aspartate 128.

It belongs to the MoaC family. Homohexamer; trimer of dimers.

The enzyme catalyses (8S)-3',8-cyclo-7,8-dihydroguanosine 5'-triphosphate = cyclic pyranopterin phosphate + diphosphate. It participates in cofactor biosynthesis; molybdopterin biosynthesis. Its function is as follows. Catalyzes the conversion of (8S)-3',8-cyclo-7,8-dihydroguanosine 5'-triphosphate to cyclic pyranopterin monophosphate (cPMP). The protein is Cyclic pyranopterin monophosphate synthase of Burkholderia vietnamiensis (strain G4 / LMG 22486) (Burkholderia cepacia (strain R1808)).